Reading from the N-terminus, the 238-residue chain is Succinate dehydrogenase iron-sulfur subunit (238 aa).

The 97-residue stretch at 1-97 folds into the 2Fe-2S ferredoxin-type domain; sequence MKLEFSIYRY…KIVIRPLPGL (97 aa). [2Fe-2S] cluster is bound by residues Cys-55, Cys-60, and Cys-75. Residues 139-169 enclose the 4Fe-4S ferredoxin-type domain; sequence QREKLDGLYECILCACCSTSCPSFWWNPDKF. 3 residues coordinate [4Fe-4S] cluster: Cys-149, Cys-152, and Cys-155. Cys-159 is a [3Fe-4S] cluster binding site. Position 164 (Trp-164) interacts with a ubiquinone. Residues Cys-206 and Cys-212 each contribute to the [3Fe-4S] cluster site. Cys-216 lines the [4Fe-4S] cluster pocket.

The protein belongs to the succinate dehydrogenase/fumarate reductase iron-sulfur protein family. Part of an enzyme complex containing four subunits: a flavoprotein, an iron-sulfur, cytochrome b-556, and a hydrophobic anchor protein. [2Fe-2S] cluster serves as cofactor. It depends on [3Fe-4S] cluster as a cofactor. The cofactor is [4Fe-4S] cluster.

The enzyme catalyses a quinone + succinate = fumarate + a quinol. It participates in carbohydrate metabolism; tricarboxylic acid cycle; fumarate from succinate (bacterial route): step 1/1. In terms of biological role, two distinct, membrane-bound, FAD-containing enzymes are responsible for the catalysis of fumarate and succinate interconversion; the fumarate reductase is used in anaerobic growth, and the succinate dehydrogenase is used in aerobic growth. This is Succinate dehydrogenase iron-sulfur subunit (sdhB) from Salmonella typhimurium (strain LT2 / SGSC1412 / ATCC 700720).